A 270-amino-acid polypeptide reads, in one-letter code: 5'-AMP-activated protein kinase subunit beta-1 (270 aa).

The tract at residues 1–44 (MGNTSSERAALDRQGGHKTPRRDSSGGSKDGDRPKILMDSPEDA) is disordered. Gly2 carries the N-myristoyl glycine lipid modification. At Thr4 the chain carries Phosphothreonine. Phosphoserine is present on residues Ser5 and Ser6. The span at 9-36 (AALDRQGGHKTPRRDSSGGSKDGDRPKI) shows a compositional bias: basic and acidic residues. Phosphothreonine is present on Thr19. 2 positions are modified to phosphoserine; by autocatalysis: Ser24 and Ser25. Ser40, Ser96, and Ser101 each carry phosphoserine. Positions 68–163 (EVNDKAPAQA…QVKKTDFEVF (96 aa)) are glycogen-binding domain. Residue Ser108 is modified to Phosphoserine; by autocatalysis. Thr148 carries the phosphothreonine modification. Residue Ser182 is modified to Phosphoserine. An N6-succinyllysine modification is found at Lys201.

Belongs to the 5'-AMP-activated protein kinase beta subunit family. AMPK is a heterotrimer of an alpha catalytic subunit (PRKAA1 or PRKAA2), a beta (PRKAB1 or PRKAB2) and a gamma non-catalytic subunits (PRKAG1, PRKAG2 or PRKAG3). Interacts with FNIP1 and FNIP2. Post-translationally, phosphorylated when associated with the catalytic subunit (PRKAA1 or PRKAA2). Phosphorylated by ULK1; leading to negatively regulate AMPK activity and suggesting the existence of a regulatory feedback loop between ULK1 and AMPK.

Non-catalytic subunit of AMP-activated protein kinase (AMPK), an energy sensor protein kinase that plays a key role in regulating cellular energy metabolism. In response to reduction of intracellular ATP levels, AMPK activates energy-producing pathways and inhibits energy-consuming processes: inhibits protein, carbohydrate and lipid biosynthesis, as well as cell growth and proliferation. AMPK acts via direct phosphorylation of metabolic enzymes, and by longer-term effects via phosphorylation of transcription regulators. Also acts as a regulator of cellular polarity by remodeling the actin cytoskeleton; probably by indirectly activating myosin. Beta non-catalytic subunit acts as a scaffold on which the AMPK complex assembles, via its C-terminus that bridges alpha (PRKAA1 or PRKAA2) and gamma subunits (PRKAG1, PRKAG2 or PRKAG3). The sequence is that of 5'-AMP-activated protein kinase subunit beta-1 (PRKAB1) from Bos taurus (Bovine).